The primary structure comprises 265 residues: Type III pantothenate kinase (265 aa).

D17–S24 provides a ligand contact to ATP. Position 114 to 117 (G114 to V117) interacts with substrate. Catalysis depends on D116, which acts as the Proton acceptor. D137 contacts K(+). T140 lines the ATP pocket. Substrate is bound at residue T192.

It belongs to the type III pantothenate kinase family. Homodimer. It depends on NH4(+) as a cofactor. The cofactor is K(+).

The protein localises to the cytoplasm. It catalyses the reaction (R)-pantothenate + ATP = (R)-4'-phosphopantothenate + ADP + H(+). It functions in the pathway cofactor biosynthesis; coenzyme A biosynthesis; CoA from (R)-pantothenate: step 1/5. In terms of biological role, catalyzes the phosphorylation of pantothenate (Pan), the first step in CoA biosynthesis. The chain is Type III pantothenate kinase from Borrelia hermsii (strain HS1 / DAH).